Reading from the N-terminus, the 589-residue chain is Threonine--tRNA ligase (589 aa).

Residues 191-487 (DHRKIGKNLG…LLEQTKGNFP (297 aa)) are catalytic. 3 residues coordinate Zn(2+): Cys-284, His-335, and His-464.

It belongs to the class-II aminoacyl-tRNA synthetase family. As to quaternary structure, homodimer. The cofactor is Zn(2+).

It is found in the cytoplasm. It catalyses the reaction tRNA(Thr) + L-threonine + ATP = L-threonyl-tRNA(Thr) + AMP + diphosphate + H(+). Catalyzes the attachment of threonine to tRNA(Thr) in a two-step reaction: L-threonine is first activated by ATP to form Thr-AMP and then transferred to the acceptor end of tRNA(Thr). Also edits incorrectly charged L-seryl-tRNA(Thr). In Mycoplasmopsis pulmonis (strain UAB CTIP) (Mycoplasma pulmonis), this protein is Threonine--tRNA ligase.